A 123-amino-acid chain; its full sequence is Holo-[acyl-carrier-protein] synthase (123 aa).

Mg(2+)-binding residues include D8 and E55.

Belongs to the P-Pant transferase superfamily. AcpS family. Mg(2+) serves as cofactor.

It localises to the cytoplasm. The catalysed reaction is apo-[ACP] + CoA = holo-[ACP] + adenosine 3',5'-bisphosphate + H(+). Functionally, transfers the 4'-phosphopantetheine moiety from coenzyme A to a Ser of acyl-carrier-protein. This is Holo-[acyl-carrier-protein] synthase from Caldicellulosiruptor saccharolyticus (strain ATCC 43494 / DSM 8903 / Tp8T 6331).